A 238-amino-acid chain; its full sequence is Ribitol-5-phosphate cytidylyltransferase (238 aa).

CTP is bound by residues 7-10 (LAGG) and 81-87 (GSDRNET).

The protein belongs to the IspD/TarI cytidylyltransferase family. TarI subfamily.

It catalyses the reaction D-ribitol 5-phosphate + CTP + H(+) = CDP-L-ribitol + diphosphate. Its pathway is cell wall biogenesis; poly(ribitol phosphate) teichoic acid biosynthesis. Its function is as follows. Catalyzes the transfer of the cytidylyl group of CTP to D-ribitol 5-phosphate. This chain is Ribitol-5-phosphate cytidylyltransferase, found in Staphylococcus saprophyticus subsp. saprophyticus (strain ATCC 15305 / DSM 20229 / NCIMB 8711 / NCTC 7292 / S-41).